A 501-amino-acid polypeptide reads, in one-letter code: Lycopene beta cyclase, chloroplastic (501 aa).

A chloroplast-targeting transit peptide spans 1–48 (MDTLLKTPNKLDFFIPQFHGFERLCSNNPYHSRVRLGVKKRAIKIVSS). Position 49 is an N-acetylvaline (valine 49). Residue 85–113 (LAIVGGGPAGLAVAQQVSEAGLSVCSIDP) participates in NAD(+) binding.

This sequence belongs to the lycopene cyclase family.

The protein resides in the plastid. The protein localises to the chloroplast. The catalysed reaction is a carotenoid psi-end group = a carotenoid beta-end derivative. It functions in the pathway carotenoid biosynthesis; beta-carotene biosynthesis. It participates in carotenoid biosynthesis; beta-zeacarotene biosynthesis. Its function is as follows. Involved in carotenoid biosynthesis. Catalyzes the double cyclization reaction which converts lycopene to beta-carotene and neurosporene to beta-zeacarotene. Major lycopene beta-cyclase that does not seem to be involved in neoxanthin synthesis. Involved in salt tolerance improvement by increasing synthesis of carotenoids, which impairs reactive oxygen species (ROS) and protects the photosynthetic system under salt stress. The polypeptide is Lycopene beta cyclase, chloroplastic (Arabidopsis thaliana (Mouse-ear cress)).